The following is a 414-amino-acid chain: Ribulose bisphosphate carboxylase large chain (414 aa).

Substrate-binding residues include Asn100 and Thr150. Catalysis depends on Lys152, which acts as the Proton acceptor. Lys154 serves as a coordination point for substrate. Mg(2+) is bound by residues Lys178, Asp180, and Glu181. Position 178 is an N6-carboxylysine (Lys178). His271 (proton acceptor) is an active-site residue. Positions 272, 304, and 356 each coordinate substrate.

It belongs to the RuBisCO large chain family. Type I subfamily. As to quaternary structure, heterohexadecamer of 8 large chains and 8 small chains; disulfide-linked. The disulfide link is formed within the large subunit homodimers. It depends on Mg(2+) as a cofactor. Post-translationally, the disulfide bond which can form in the large chain dimeric partners within the hexadecamer appears to be associated with oxidative stress and protein turnover.

Its subcellular location is the plastid. The protein localises to the chloroplast. The catalysed reaction is 2 (2R)-3-phosphoglycerate + 2 H(+) = D-ribulose 1,5-bisphosphate + CO2 + H2O. The enzyme catalyses D-ribulose 1,5-bisphosphate + O2 = 2-phosphoglycolate + (2R)-3-phosphoglycerate + 2 H(+). Its function is as follows. RuBisCO catalyzes two reactions: the carboxylation of D-ribulose 1,5-bisphosphate, the primary event in carbon dioxide fixation, as well as the oxidative fragmentation of the pentose substrate in the photorespiration process. Both reactions occur simultaneously and in competition at the same active site. The protein is Ribulose bisphosphate carboxylase large chain (rbcL) of Blechnopsis orientalis (Fish fern).